A 447-amino-acid polypeptide reads, in one-letter code: MKSPNETSFTNHTLENASTFGADLSIESNESLVSLDEYLSNTLPLHLQQLFLENLQKRQQGILESASDSIIEAVRDSSQQKFQNGLHLSLDSGVGSKGSVFSAWSFAQGLVIGQLSVIVVLIFFIKFFIFSEGPIKTEGPKGGKSGPKRDSAYVSPLLSTSTSHFLSSIIKRGESDGADSSENTDTDRKFSQINTILEKTYYNVETHSPETLDWFNVLIGQTIQQFREEALQKDNIVHSLNNFIARKSGELPQYLDTIKITELDIGEDFPILSNCRIQYSPNSNKQRLEAKIDIDLSDRLALGIETKLLVNYPKPFTAALPIQLTVSIVRFQACLTVSLTTAEEFVPTSENEASYGSENGGYFLMFSFSPEYRMEFDVKSLIGARSKLQDIPKIGSLIESQIKKWFVERCVEPRFQFIKLPSLWPRSKNTREEKTENDDISMKSTDL.

Over 1–109 (MKSPNETSFT…VFSAWSFAQG (109 aa)) the chain is Lumenal. A helical transmembrane segment spans residues 110–130 (LVIGQLSVIVVLIFFIKFFIF). The Cytoplasmic segment spans residues 131–447 (SEGPIKTEGP…DDISMKSTDL (317 aa)). The region spanning 208-421 (SPETLDWFNV…EPRFQFIKLP (214 aa)) is the SMP-LTD domain.

Belongs to the MMM1 family. In terms of assembly, homodimer. Component of the ER-mitochondria encounter structure (ERMES) or MDM complex, composed of MMM1, MDM10, MDM12 and MDM34. An MMM1 homodimer associates with one molecule of MDM12 on each side in a pairwise head-to-tail manner, and the SMP-LTD domains of MMM1 and MDM12 generate a continuous hydrophobic tunnel for phospholipid trafficking.

It localises to the endoplasmic reticulum membrane. In terms of biological role, component of the ERMES/MDM complex, which serves as a molecular tether to connect the endoplasmic reticulum (ER) and mitochondria. Components of this complex are involved in the control of mitochondrial shape and protein biogenesis, and function in nonvesicular lipid trafficking between the ER and mitochondria. The MDM12-MMM1 subcomplex functions in the major beta-barrel assembly pathway that is responsible for biogenesis of all outer membrane beta-barrel proteins, and acts in a late step after the SAM complex. The MDM10-MDM12-MMM1 subcomplex further acts in the TOM40-specific pathway after the action of the MDM12-MMM1 complex. Essential for establishing and maintaining the structure of mitochondria and maintenance of mtDNA nucleoids. This Lachancea thermotolerans (strain ATCC 56472 / CBS 6340 / NRRL Y-8284) (Yeast) protein is Maintenance of mitochondrial morphology protein 1.